The primary structure comprises 180 residues: Translation initiation factor IF-3 (180 aa).

Belongs to the IF-3 family. As to quaternary structure, monomer.

The protein resides in the cytoplasm. Its function is as follows. IF-3 binds to the 30S ribosomal subunit and shifts the equilibrium between 70S ribosomes and their 50S and 30S subunits in favor of the free subunits, thus enhancing the availability of 30S subunits on which protein synthesis initiation begins. The sequence is that of Translation initiation factor IF-3 from Salmonella typhimurium (strain LT2 / SGSC1412 / ATCC 700720).